The following is a 365-amino-acid chain: Cobalt-precorrin-5B C(1)-methyltransferase (365 aa).

This sequence belongs to the CbiD family.

The enzyme catalyses Co-precorrin-5B + S-adenosyl-L-methionine = Co-precorrin-6A + S-adenosyl-L-homocysteine. It functions in the pathway cofactor biosynthesis; adenosylcobalamin biosynthesis; cob(II)yrinate a,c-diamide from sirohydrochlorin (anaerobic route): step 6/10. In terms of biological role, catalyzes the methylation of C-1 in cobalt-precorrin-5B to form cobalt-precorrin-6A. In Polaromonas naphthalenivorans (strain CJ2), this protein is Cobalt-precorrin-5B C(1)-methyltransferase.